A 157-amino-acid chain; its full sequence is Ubiquitin-like protein 4A (157 aa).

A Ubiquitin-like domain is found at 1–76 (MQLTVKALQG…LNLVVKPLEK (76 aa)). Residue lysine 48 forms a Glycyl lysine isopeptide (Lys-Gly) (interchain with G-Cter in ubiquitin) linkage. Serine 90 bears the Phosphoserine mark. The segment at 96-138 (WQLISKVLARHFSAADASRVLEQLQRDYERSLSRLTLDDIERL) is required and sufficient for interaction with BAG6.

In terms of assembly, component of the BAG6/BAT3 complex, at least composed of BAG6, UBL4A and GET4/TRC35. Interacts with BAG6; the interaction is direct and required for UBL4A protein stability. Interacts with USP13; may be indirect via BAG6. Post-translationally, polyubiquitinated. Ubiquitination by AMFR and deubiquitination by USP13 may regulate the interaction between the BAG6/BAT3 complex and SGTA and therefore may regulate client proteins fate.

Its subcellular location is the cytoplasm. It is found in the cytosol. The protein resides in the nucleus. Functionally, as part of a cytosolic protein quality control complex, the BAG6/BAT3 complex, maintains misfolded and hydrophobic patches-containing proteins in a soluble state and participates in their proper delivery to the endoplasmic reticulum or alternatively can promote their sorting to the proteasome where they undergo degradation. The BAG6/BAT3 complex is involved in the post-translational delivery of tail-anchored/type II transmembrane proteins to the endoplasmic reticulum membrane. Recruited to ribosomes, it interacts with the transmembrane region of newly synthesized tail-anchored proteins and together with SGTA and ASNA1 mediates their delivery to the endoplasmic reticulum. Client proteins that cannot be properly delivered to the endoplasmic reticulum are ubiquitinated and sorted to the proteasome. Similarly, the BAG6/BAT3 complex also functions as a sorting platform for proteins of the secretory pathway that are mislocalized to the cytosol either delivering them to the proteasome for degradation or to the endoplasmic reticulum. The BAG6/BAT3 complex also plays a role in the endoplasmic reticulum-associated degradation (ERAD), a quality control mechanism that eliminates unwanted proteins of the endoplasmic reticulum through their retrotranslocation to the cytosol and their targeting to the proteasome. It maintains these retrotranslocated proteins in an unfolded yet soluble state condition in the cytosol to ensure their proper delivery to the proteasome. This is Ubiquitin-like protein 4A from Homo sapiens (Human).